Consider the following 166-residue polypeptide: Biotin carboxyl carrier protein of acetyl-CoA carboxylase (166 aa).

Residues 61–70 are compositionally biased toward polar residues; the sequence is STASEASSPA. Positions 61–82 are disordered; sequence STASEASSPASVKDVPVEEQPQ. The region spanning 90–166 is the Biotinyl-binding domain; the sequence is GDIVESPLVG…EFGQGLVRIK (77 aa). The residue at position 132 (Lys132) is an N6-biotinyllysine.

In terms of assembly, homodimer.

The protein operates within lipid metabolism; fatty acid biosynthesis. Functionally, this protein is a component of the acetyl coenzyme A carboxylase complex; first, biotin carboxylase catalyzes the carboxylation of the carrier protein and then the transcarboxylase transfers the carboxyl group to form malonyl-CoA. This is Biotin carboxyl carrier protein of acetyl-CoA carboxylase from Streptococcus pyogenes serotype M6 (strain ATCC BAA-946 / MGAS10394).